Consider the following 250-residue polypeptide: Phosphoribosylaminoimidazole-succinocarboxamide synthase (250 aa).

It belongs to the SAICAR synthetase family.

It catalyses the reaction 5-amino-1-(5-phospho-D-ribosyl)imidazole-4-carboxylate + L-aspartate + ATP = (2S)-2-[5-amino-1-(5-phospho-beta-D-ribosyl)imidazole-4-carboxamido]succinate + ADP + phosphate + 2 H(+). Its pathway is purine metabolism; IMP biosynthesis via de novo pathway; 5-amino-1-(5-phospho-D-ribosyl)imidazole-4-carboxamide from 5-amino-1-(5-phospho-D-ribosyl)imidazole-4-carboxylate: step 1/2. This is Phosphoribosylaminoimidazole-succinocarboxamide synthase from Synechococcus sp. (strain WH7803).